A 272-amino-acid chain; its full sequence is Urease accessory protein UreD (272 aa).

This sequence belongs to the UreD family. In terms of assembly, ureD, UreF and UreG form a complex that acts as a GTP-hydrolysis-dependent molecular chaperone, activating the urease apoprotein by helping to assemble the nickel containing metallocenter of UreC. The UreE protein probably delivers the nickel.

It localises to the cytoplasm. In terms of biological role, required for maturation of urease via the functional incorporation of the urease nickel metallocenter. This Opitutus terrae (strain DSM 11246 / JCM 15787 / PB90-1) protein is Urease accessory protein UreD.